The sequence spans 185 residues: Transcription factor E (185 aa).

Positions 5-88 (KNKELLEIAQ…YWRLETKKLP (84 aa)) constitute an HTH TFE/IIEalpha-type domain.

Belongs to the TFE family. In terms of assembly, monomer. Interaction with RNA polymerase subunits RpoF and RpoE is necessary for Tfe stimulatory transcription activity. Able to interact with Tbp and RNA polymerase in the absence of DNA promoter. Interacts both with the preinitiation and elongation complexes.

In terms of biological role, transcription factor that plays a role in the activation of archaeal genes transcribed by RNA polymerase. Facilitates transcription initiation by enhancing TATA-box recognition by TATA-box-binding protein (Tbp), and transcription factor B (Tfb) and RNA polymerase recruitment. Not absolutely required for transcription in vitro, but particularly important in cases where Tbp or Tfb function is not optimal. It dynamically alters the nucleic acid-binding properties of RNA polymerases by stabilizing the initiation complex and destabilizing elongation complexes. Seems to translocate with the RNA polymerase following initiation and acts by binding to the non template strand of the transcription bubble in elongation complexes. In Thermococcus kodakarensis (strain ATCC BAA-918 / JCM 12380 / KOD1) (Pyrococcus kodakaraensis (strain KOD1)), this protein is Transcription factor E.